The chain runs to 460 residues: 3-isopropylmalate dehydratase large subunit (460 aa).

[4Fe-4S] cluster is bound by residues cysteine 338, cysteine 398, and cysteine 401.

This sequence belongs to the aconitase/IPM isomerase family. LeuC type 1 subfamily. In terms of assembly, heterodimer of LeuC and LeuD. [4Fe-4S] cluster is required as a cofactor.

It catalyses the reaction (2R,3S)-3-isopropylmalate = (2S)-2-isopropylmalate. It participates in amino-acid biosynthesis; L-leucine biosynthesis; L-leucine from 3-methyl-2-oxobutanoate: step 2/4. Functionally, catalyzes the isomerization between 2-isopropylmalate and 3-isopropylmalate, via the formation of 2-isopropylmaleate. This is 3-isopropylmalate dehydratase large subunit from Streptococcus gordonii (strain Challis / ATCC 35105 / BCRC 15272 / CH1 / DL1 / V288).